A 379-amino-acid chain; its full sequence is Tubulin--tyrosine ligase (379 aa).

One can recognise a TTL domain in the interval 3-370 (TFVVRDENSS…PPDAEQQQQQ (368 aa)).

It belongs to the tubulin--tyrosine ligase family. Monomer. The cofactor is Mg(2+). It depends on K(+) as a cofactor.

The enzyme catalyses C-terminal L-alpha-aminoacyl-L-glutamyl-L-glutamyl-[tubulin] + L-tyrosine + ATP = C-terminal L-alpha-aminoacyl-L-glutamyl-L-glutamyl-L-tyrosyl-[tubulin] + ADP + phosphate + H(+). Functionally, catalyzes the post-translational addition of a tyrosine to the C-terminal end of detyrosinated alpha-tubulin. The protein is Tubulin--tyrosine ligase (TTL) of Sus scrofa (Pig).